The primary structure comprises 860 residues: Mycobactin import ATP-binding/permease protein IrtA (860 aa).

Residues 1-293 are Cytoplasmic-facing; the sequence is MARGIQGVMM…GRLLAPLKTT (293 aa). Positions 15–124 constitute an FAD-binding FR-type domain; it reads ARDHQATVVS…LGSAGFSVPE (110 aa). FAD-binding positions include 70–73, 87–91, 97–98, and 238–240; these read RAYT, DVVLH, AS, and TEG. Positions 242–275 are disordered; that stretch reads AMGTKRGDDDKTPEVNPAPRADKPEAPAPAAAGR. A helical transmembrane segment spans residues 294–314; that stretch reads LIISGVLQAIITLVQLAPFVL. An ABC transmembrane type-1 domain is found at 295–577; the sequence is IISGVLQAII…IAYGLGGIRG (283 aa). The Periplasmic portion of the chain corresponds to 315–335; the sequence is LVELARLLLSGASSDRLWTLG. Residues 336 to 356 form a helical membrane-spanning segment; the sequence is VVAISLLGTGSFLAAALTLWL. Residues 357 to 409 are Cytoplasmic-facing; it reads HLVDARFARDLRTGLLTKMSRLPLGWFTARGSGSIKQLVQDDTLSLHYLITHA. Residues 410-430 traverse the membrane as a helical segment; that stretch reads IPDAVAAVIAPVAVLVYLFVV. Residues 431 to 433 are Periplasmic-facing; that stretch reads DWR. The helical transmembrane segment at 434 to 454 threads the bilayer; that stretch reads LALVMFVPVLIYLVLMTVMTI. Residues 455–525 are Cytoplasmic-facing; that stretch reads QSGPKIAQSQ…KKSMMDLVTR (71 aa). The chain crosses the membrane as a helical span at residues 526–546; the sequence is PGTFLWLIVAVGTPMITSGAM. Over 547–550 the chain is Periplasmic; it reads DPVD. A helical membrane pass occupies residues 551-571; sequence ILPFLLLGTTFGVRLLGIAYG. The Cytoplasmic segment spans residues 572 to 860; sequence LGGIRGGMLA…AAGPTGEAVR (289 aa). An ABC transporter domain is found at 609-842; that stretch reads VVFDNVTFGY…AGRYRQLWET (234 aa). Position 642–649 (642–649) interacts with ATP; sequence GPSGSGKS.

Belongs to the ABC transporter superfamily. Siderophore-Fe(3+) uptake transporter (SIUT) (TC 3.A.1.21) family. Forms a heterodimer with IrtB. FAD serves as cofactor.

Its subcellular location is the cell inner membrane. In terms of biological role, part of the ABC transporter complex IrtAB involved in the import of iron-bound mycobactin (Fe-MBT) and carboxymycobactin (Fe-cMBT). Has a preference for Fe-MBT over Fe-cMBT. Mycobactins are then reduced by the siderophore interaction domain to facilitate iron release in the bacterial cell. Transmembrane domains (TMD) form a pore in the membrane and the ATP-binding domain (NBD) is responsible for energy generation. The chain is Mycobactin import ATP-binding/permease protein IrtA from Mycolicibacterium smegmatis (strain ATCC 700084 / mc(2)155) (Mycobacterium smegmatis).